The following is a 61-amino-acid chain: Small ribosomal subunit protein uS14 (61 aa).

Zn(2+) is bound by residues Cys24, Cys27, Cys40, and Cys43.

Belongs to the universal ribosomal protein uS14 family. Zinc-binding uS14 subfamily. In terms of assembly, part of the 30S ribosomal subunit. Contacts proteins S3 and S10. Zn(2+) is required as a cofactor.

Binds 16S rRNA, required for the assembly of 30S particles and may also be responsible for determining the conformation of the 16S rRNA at the A site. The chain is Small ribosomal subunit protein uS14 from Leptospira borgpetersenii serovar Hardjo-bovis (strain JB197).